A 237-amino-acid polypeptide reads, in one-letter code: MIKNLPQIVLLNIVGLALFLSWYIPVNHGFWLPIDADIFYFFNQKLVESKAFLWLVALTNNRAFDGCSLLAMGMLMLSFWLKENAPGRRRIVIIGLVMLLTAVVLNQLGQALIPVKRASPTLTFTDINRVSELLSVPTKDASRDSFPGDHGMMLLIFSAFMWRYFGKVAGLIALIIFVVFAFPRVMIGAHWFTDIIVGSMTVILIGLPWVLLTPLSDRLITFFDKSLPGKNKHFQNK.

At 1–5 (MIKNL) the chain is on the cytoplasmic side. The chain crosses the membrane as a helical span at residues 6–26 (PQIVLLNIVGLALFLSWYIPV). The Periplasmic portion of the chain corresponds to 27 to 62 (NHGFWLPIDADIFYFFNQKLVESKAFLWLVALTNNR). Residues 63–83 (AFDGCSLLAMGMLMLSFWLKE) traverse the membrane as a helical segment. Residues 84-90 (NAPGRRR) lie on the Cytoplasmic side of the membrane. The chain crosses the membrane as a helical span at residues 91–111 (IVIIGLVMLLTAVVLNQLGQA). Residues 112–145 (LIPVKRASPTLTFTDINRVSELLSVPTKDASRDS) lie on the Periplasmic side of the membrane. K167 is a topological domain (cytoplasmic). The helical transmembrane segment at 168 to 188 (VAGLIALIIFVVFAFPRVMIG) threads the bilayer. Residues 189–194 (AHWFTD) lie on the Periplasmic side of the membrane. Residues 195–215 (IIVGSMTVILIGLPWVLLTPL) form a helical membrane-spanning segment. The Cytoplasmic segment spans residues 216-237 (SDRLITFFDKSLPGKNKHFQNK).

This sequence belongs to the LpxT phosphotransferase family.

It is found in the cell inner membrane. It catalyses the reaction di-trans,octa-cis-undecaprenyl diphosphate + alpha-Kdo-(2-&gt;4)-alpha-Kdo-(2-&gt;6)-lipid A (E. coli) = (Kdo)2-lipid A 1-diphosphate + di-trans,octa-cis-undecaprenyl phosphate. The protein operates within bacterial outer membrane biogenesis; lipopolysaccharide biosynthesis. Its activity is regulated as follows. Inhibited by BasR. This regulation does not occur at the level of transcription, but rather following the assembly of LpxT into the inner membrane. Involved in the modification of the lipid A domain of lipopolysaccharides (LPS). Transfers a phosphate group from undecaprenyl pyrophosphate (C55-PP) to lipid A to form lipid A 1-diphosphate. Contributes to the recycling of undecaprenyl phosphate (C55-P). In vitro, has low undecaprenyl-diphosphate phosphatase activity. This Escherichia coli (strain K12) protein is Lipid A 1-diphosphate synthase.